A 71-amino-acid chain; its full sequence is Plasticin-DA1 (71 aa).

The N-terminal stretch at 1–22 (MAFLKKSLFLVLFLALVPLSIC) is a signal peptide. Positions 23-42 (EAEKREEENEEKQEDDDESE) are excised as a propeptide. Positions 25 to 45 (EKREEENEEKQEDDDESEKKR) are disordered. Acidic residues predominate over residues 30 to 40 (ENEEKQEDDDE). Gly-68 carries the post-translational modification Glycine amide. A propeptide spanning residues 70-71 (ER) is cleaved from the precursor.

It belongs to the frog skin active peptide (FSAP) family. Plasticin subfamily. Expressed by the skin glands.

The protein localises to the secreted. Its subcellular location is the target cell membrane. Functionally, neutral peptide with no antimicrobial activity. Does not permeate bacterial membranes. May act in synergy with cationic peptides by enhancing their activity. Has a moderate hemolytic activity. It interacts with zwitterionic phospholipids (DMPC) without perturbing either the interface or inside of the bilayer, whereas it causes little perturbations at the interface peptide-anionic vesicles (DMPG) as well as in the bilayer alkyl chains. The polypeptide is Plasticin-DA1 (Agalychnis dacnicolor (Giant Mexican leaf frog)).